A 1620-amino-acid chain; its full sequence is ALK tyrosine kinase receptor (1620 aa).

Residues 1-18 (MGAIGLLWLLPLLLSTAA) form the signal peptide. Residues 19-1038 (VGSGMGTGQR…PHLPLSLILS (1020 aa)) lie on the Extracellular side of the membrane. The heparin-binding region stretch occupies residues 48–70 (RLQRKSLAVDFVVPSLFRVYARD). N-linked (GlcNAc...) asparagine glycans are attached at residues Asn-169, Asn-244, Asn-285, Asn-324, Asn-411, Asn-424, Asn-445, Asn-563, Asn-571, and Asn-627. One can recognise an MAM 1 domain in the interval 264-427 (LECSFDFPCE…DFFALKNCSE (164 aa)). In terms of domain architecture, LDL-receptor class A spans 437–473 (LQSSFTCWNGTVLQLGQACDFHQDCAQGEDESQMCRK). One can recognise an MAM 2 domain in the interval 478-636 (FYCNFEDGFC…NISISLDCYL (159 aa)). The tract at residues 650–674 (PKSRNLFERNPNKELKPGENSPRQT) is disordered. The segment covering 654–666 (NLFERNPNKELKP) has biased composition (basic and acidic residues). An intrachain disulfide couples Cys-688 to Cys-701. Asn-709 carries N-linked (GlcNAc...) asparagine glycosylation. The cysteines at positions 783 and 794 are disulfide-linked. Asn-808, Asn-863, Asn-864, and Asn-886 each carry an N-linked (GlcNAc...) asparagine glycan. Cys-906 and Cys-928 form a disulfide bridge. A glycan (N-linked (GlcNAc...) asparagine) is linked at Asn-986. 3 cysteine pairs are disulfide-bonded: Cys-987/Cys-995, Cys-990/Cys-1006, and Cys-1008/Cys-1021. An EGF-like region spans residues 987 to 1025 (CSHCEVDECHMDPESHKVICFCDHGTVLAEDGVSCIVSP). A helical transmembrane segment spans residues 1039–1059 (VVTSALVAALVLAFSGIMIVY). Residues 1060–1620 (RRKHQELQAM…SKNSMNQPGP (561 aa)) lie on the Cytoplasmic side of the membrane. Phosphotyrosine is present on residues Tyr-1078, Tyr-1092, and Tyr-1096. The Protein kinase domain occupies 1116 to 1392 (ITLIRGLGHG…IEYCTQDPDV (277 aa)). An ATP-binding site is contributed by His-1124. Tyr-1131 bears the Phosphotyrosine mark. ATP-binding positions include Lys-1150 and 1197 to 1199 (ELM). The active-site Proton acceptor is Asp-1249. Asp-1270 contributes to the ATP binding site. A Phosphotyrosine modification is found at Tyr-1278. Positions 1408-1463 (EEKVPVRPKDPEGVPPLLVSQQAKREEERSPAAPPPLPTTSSGKAAKKPTAAEISV) are disordered. Residues 1410–1419 (KVPVRPKDPE) are compositionally biased toward basic and acidic residues. Residue Tyr-1507 is modified to Phosphotyrosine. The segment at 1514-1540 (KPTKKNNPIAKKEPHDRGNLGLEGSCT) is disordered. Tyr-1604 is modified (phosphotyrosine).

This sequence belongs to the protein kinase superfamily. Tyr protein kinase family. Insulin receptor subfamily. Homodimer; homodimerizes following heparin- and ligand-binding. Interacts with CBL, IRS1, PIK3R1 and PLCG1. Interacts with FRS2 and SHC1. Interacts with PTN and MDK. In terms of processing, phosphorylated at tyrosine residues by autocatalysis, which activates kinase activity. In cells not stimulated by a ligand, receptor protein tyrosine phosphatase beta and zeta complex (PTPRB/PTPRZ1) dephosphorylates ALK at the sites in ALK that are undergoing autophosphorylation through autoactivation. Phosphorylation at Tyr-1507 is critical for SHC1 association. Post-translationally, N-glycosylated. In terms of tissue distribution, expressed in brain and CNS. Also expressed in the small intestine and testis, but not in normal lymphoid cells.

The protein resides in the cell membrane. The enzyme catalyses L-tyrosyl-[protein] + ATP = O-phospho-L-tyrosyl-[protein] + ADP + H(+). Activated upon ALKAL2 ligand-binding. ALKAL2-driven activation is coupled with heparin-binding. Following ligand-binding, homodimerizes and autophosphorylates, activating its kinase activity. Inactivated through dephosphorylation by receptor protein tyrosine phosphatase beta and zeta complex (PTPRB/PTPRZ1) when there is no stimulation by a ligand. Staurosporine, crizotinib and CH5424802 act as inhibitors of ALK kinase activity. Neuronal receptor tyrosine kinase that is essentially and transiently expressed in specific regions of the central and peripheral nervous systems and plays an important role in the genesis and differentiation of the nervous system. Also acts as a key thinness protein involved in the resistance to weight gain: in hypothalamic neurons, controls energy expenditure acting as a negative regulator of white adipose tissue lipolysis and sympathetic tone to fine-tune energy homeostasis. Following activation by ALKAL2 ligand at the cell surface, transduces an extracellular signal into an intracellular response. In contrast, ALKAL1 is not a potent physiological ligand for ALK. Ligand-binding to the extracellular domain induces tyrosine kinase activation, leading to activation of the mitogen-activated protein kinase (MAPK) pathway. Phosphorylates almost exclusively at the first tyrosine of the Y-x-x-x-Y-Y motif. Induces tyrosine phosphorylation of CBL, FRS2, IRS1 and SHC1, as well as of the MAP kinases MAPK1/ERK2 and MAPK3/ERK1. ALK activation may also be regulated by pleiotrophin (PTN) and midkine (MDK). PTN-binding induces MAPK pathway activation, which is important for the anti-apoptotic signaling of PTN and regulation of cell proliferation. MDK-binding induces phosphorylation of the ALK target insulin receptor substrate (IRS1), activates mitogen-activated protein kinases (MAPKs) and PI3-kinase, resulting also in cell proliferation induction. Drives NF-kappa-B activation, probably through IRS1 and the activation of the AKT serine/threonine kinase. Recruitment of IRS1 to activated ALK and the activation of NF-kappa-B are essential for the autocrine growth and survival signaling of MDK. The protein is ALK tyrosine kinase receptor of Homo sapiens (Human).